We begin with the raw amino-acid sequence, 471 residues long: Glutamate--tRNA ligase (471 aa).

The 'HIGH' region motif lies at 9 to 19; it reads PSPTGFLHVGG. The Zn(2+) site is built by C98, C100, C125, and D127. The 'KMSKS' region motif lies at 237–241; the sequence is KLSKR. Residue K240 participates in ATP binding.

It belongs to the class-I aminoacyl-tRNA synthetase family. Glutamate--tRNA ligase type 1 subfamily. In terms of assembly, monomer. Zn(2+) serves as cofactor.

The protein resides in the cytoplasm. It catalyses the reaction tRNA(Glu) + L-glutamate + ATP = L-glutamyl-tRNA(Glu) + AMP + diphosphate. Functionally, catalyzes the attachment of glutamate to tRNA(Glu) in a two-step reaction: glutamate is first activated by ATP to form Glu-AMP and then transferred to the acceptor end of tRNA(Glu). The chain is Glutamate--tRNA ligase from Aeromonas salmonicida (strain A449).